A 459-amino-acid chain; its full sequence is Periodic tryptophan protein 1 homolog (459 aa).

The disordered stretch occupies residues 44 to 84; it reads GDTQQELDEESDDDAEEGENAEEDQNDMDVDDHADANSENR. Over residues 48–73 the composition is skewed to acidic residues; that stretch reads QELDEESDDDAEEGENAEEDQNDMDV. The segment covering 74–84 has biased composition (basic and acidic residues); it reads DDHADANSENR. WD repeat units follow at residues 168-214, 232-272, 275-315, 321-361, and 365-405; these read LLPS…AIEP, GHKD…PHTT, AFGK…GVNS, KVDG…QLLW, and AHNE…AKHV. At serine 385 the chain carries Phosphoserine.

Belongs to the WD repeat PWP1 family. As to quaternary structure, interacts with Mybbp1A. Post-translationally, phosphorylated in response to nutrient-activated TORC1 signaling. In terms of tissue distribution, detected in the germline of adult testis and ovary (at protein level). Detected in ovary somatic cells, in zfh1-positive cyst cells in the testis and absent in differentiated cyst cells (at protein level).

Its subcellular location is the nucleus. The protein localises to the nucleolus. The protein resides in the chromosome. It is found in the nucleoplasm. Functionally, chromatin-associated factor that regulates transcription. Regulates Pol I-mediated rRNA biogenesis and, probably, Pol III-mediated transcription. Regulates the localization to the nucleolus of Cdk7, a regulator of the Pol I-elongation factor TFIIH. Acts as a regulator of cell proliferation and tissue growth as part of the TORC1 and Myc signaling pathway in response to nutrients. Required in males for both germline stem cell (GSC) maintenance and early stages of germ cell differentiation of germ cell cysts. Not required for female germline stem cell (GSC) maintenance, but necessary to regulate germ cell differentiation and egg chamber development. In female somatic cells, required for follicle stem cell survival and maintenance. This Drosophila melanogaster (Fruit fly) protein is Periodic tryptophan protein 1 homolog.